Reading from the N-terminus, the 88-residue chain is uncharacterized protein (88 aa).

3 helical membrane-spanning segments follow: residues 3–23 (VFILFYLWIVPIVIGILCSVA), 33–53 (VAPGIAMIVLSIISLITAFTA), and 61–81 (FIGGMFLFGTFLVGSAFPFFF).

It is found in the cell membrane. This is an uncharacterized protein from Bacillus subtilis (strain 168).